The following is a 166-amino-acid chain: UPF0304 protein VFMJ11_1926 (166 aa).

The protein belongs to the UPF0304 family.

This chain is UPF0304 protein VFMJ11_1926, found in Aliivibrio fischeri (strain MJ11) (Vibrio fischeri).